Reading from the N-terminus, the 184-residue chain is dCTP deaminase (184 aa).

DCTP is bound by residues 97–102 (RSTFAR) and aspartate 113. The Proton donor/acceptor role is filled by glutamate 123. The dCTP site is built by tyrosine 155 and glutamine 162.

This sequence belongs to the dCTP deaminase family. As to quaternary structure, homotrimer.

The catalysed reaction is dCTP + H2O + H(+) = dUTP + NH4(+). It participates in pyrimidine metabolism; dUMP biosynthesis; dUMP from dCTP (dUTP route): step 1/2. Functionally, catalyzes the deamination of dCTP to dUTP. The polypeptide is dCTP deaminase (Saccharolobus solfataricus (strain ATCC 35092 / DSM 1617 / JCM 11322 / P2) (Sulfolobus solfataricus)).